The following is a 337-amino-acid chain: tRNA N6-adenosine threonylcarbamoyltransferase (337 aa).

2 residues coordinate Fe cation: His111 and His115. Residues 134–138 (LVSGG), Asp167, Gly180, and Asn272 contribute to the substrate site. Asp300 is a Fe cation binding site.

This sequence belongs to the KAE1 / TsaD family. Fe(2+) serves as cofactor.

The protein localises to the cytoplasm. The enzyme catalyses L-threonylcarbamoyladenylate + adenosine(37) in tRNA = N(6)-L-threonylcarbamoyladenosine(37) in tRNA + AMP + H(+). Its function is as follows. Required for the formation of a threonylcarbamoyl group on adenosine at position 37 (t(6)A37) in tRNAs that read codons beginning with adenine. Is involved in the transfer of the threonylcarbamoyl moiety of threonylcarbamoyl-AMP (TC-AMP) to the N6 group of A37, together with TsaE and TsaB. TsaD likely plays a direct catalytic role in this reaction. The protein is tRNA N6-adenosine threonylcarbamoyltransferase of Escherichia coli O139:H28 (strain E24377A / ETEC).